The following is a 211-amino-acid chain: Thiamine-phosphate synthase (211 aa).

4-amino-2-methyl-5-(diphosphooxymethyl)pyrimidine-binding positions include 37–41 and Asn69; that span reads QLRIK. Mg(2+) is bound by residues Asp70 and Asp89. Position 108 (Ser108) interacts with 4-amino-2-methyl-5-(diphosphooxymethyl)pyrimidine. 134–136 lines the 2-[(2R,5Z)-2-carboxy-4-methylthiazol-5(2H)-ylidene]ethyl phosphate pocket; sequence TQT. A 4-amino-2-methyl-5-(diphosphooxymethyl)pyrimidine-binding site is contributed by Lys137. 2-[(2R,5Z)-2-carboxy-4-methylthiazol-5(2H)-ylidene]ethyl phosphate contacts are provided by residues Gly166 and 186 to 187; that span reads VS.

It belongs to the thiamine-phosphate synthase family. Mg(2+) serves as cofactor.

It carries out the reaction 2-[(2R,5Z)-2-carboxy-4-methylthiazol-5(2H)-ylidene]ethyl phosphate + 4-amino-2-methyl-5-(diphosphooxymethyl)pyrimidine + 2 H(+) = thiamine phosphate + CO2 + diphosphate. It catalyses the reaction 2-(2-carboxy-4-methylthiazol-5-yl)ethyl phosphate + 4-amino-2-methyl-5-(diphosphooxymethyl)pyrimidine + 2 H(+) = thiamine phosphate + CO2 + diphosphate. The enzyme catalyses 4-methyl-5-(2-phosphooxyethyl)-thiazole + 4-amino-2-methyl-5-(diphosphooxymethyl)pyrimidine + H(+) = thiamine phosphate + diphosphate. It functions in the pathway cofactor biosynthesis; thiamine diphosphate biosynthesis; thiamine phosphate from 4-amino-2-methyl-5-diphosphomethylpyrimidine and 4-methyl-5-(2-phosphoethyl)-thiazole: step 1/1. In terms of biological role, condenses 4-methyl-5-(beta-hydroxyethyl)thiazole monophosphate (THZ-P) and 2-methyl-4-amino-5-hydroxymethyl pyrimidine pyrophosphate (HMP-PP) to form thiamine monophosphate (TMP). The polypeptide is Thiamine-phosphate synthase (Escherichia coli (strain SE11)).